Here is a 267-residue protein sequence, read N- to C-terminus: Small ribosomal subunit protein uS2 (267 aa).

The segment at 225–267 is disordered; that stretch reads LREQELEGEEQEEAAPATEEEKKELIEEAVAEGEAEETEEEEK. Positions 251–267 are enriched in acidic residues; sequence EEAVAEGEAEETEEEEK.

The protein belongs to the universal ribosomal protein uS2 family.

In Nitratiruptor sp. (strain SB155-2), this protein is Small ribosomal subunit protein uS2.